Consider the following 69-residue polypeptide: MNQPSLDILMKKADSRYTLVVATAKRARQITAGESSKLKHISNKPVTIALHEIGNDLITYQRLKSSQNK.

The protein belongs to the RNA polymerase subunit omega family. The RNAP catalytic core consists of 2 alpha, 1 beta, 1 beta' and 1 omega subunit. When a sigma factor is associated with the core the holoenzyme is formed, which can initiate transcription.

It catalyses the reaction RNA(n) + a ribonucleoside 5'-triphosphate = RNA(n+1) + diphosphate. In terms of biological role, promotes RNA polymerase assembly. Latches the N- and C-terminal regions of the beta' subunit thereby facilitating its interaction with the beta and alpha subunits. The protein is DNA-directed RNA polymerase subunit omega of Carboxydothermus hydrogenoformans (strain ATCC BAA-161 / DSM 6008 / Z-2901).